The primary structure comprises 330 residues: Aspartate--ammonia ligase (330 aa).

The protein belongs to the class-II aminoacyl-tRNA synthetase family. AsnA subfamily.

It localises to the cytoplasm. It catalyses the reaction L-aspartate + NH4(+) + ATP = L-asparagine + AMP + diphosphate + H(+). Its pathway is amino-acid biosynthesis; L-asparagine biosynthesis; L-asparagine from L-aspartate (ammonia route): step 1/1. The polypeptide is Aspartate--ammonia ligase (Haemophilus ducreyi (strain 35000HP / ATCC 700724)).